The primary structure comprises 337 residues: MATASPAADGGRGRPWEGGLVSWPPAPPLTLPWTWMGPSWGQHPGHWGFPALTEPSASPAAGLGIFEVRRVLDASGCSMLAPLQTGAARFSSYLLSRARKVLGSHLFSPCGVPEFCSISTRKLAAHGFGASMAAMVSFPPQRYHYFLVLDFEATCDKPQIHPQEIIEFPILKLNGRTMEIESTFHMYVQPVVHPQLTPFCTELTGIIQAMVDGQPSLQQVLERVDEWMAKEGLLDPNVKSIFVTCGDWDLKVMLPGQCQYLGLPVADYFKQWINLKKAYSFAMGCWPKNGLLDMNKGLSLQHIGRPHSGIDDCKNIANIMKTLAYRGFIFKQTSKPF.

Positions 146–320 constitute an Exonuclease domain; that stretch reads FLVLDFEATC…DDCKNIANIM (175 aa). Mg(2+) contacts are provided by D150, E152, and D249. The active-site Proton acceptor is E152. E152 contributes to the AMP binding site. H307 acts as the Proton acceptor in catalysis. H307 contacts AMP. D312 lines the Mg(2+) pocket.

Interacts with PRNP. Mg(2+) is required as a cofactor.

This is ERI1 exoribonuclease 3 (ERI3) from Homo sapiens (Human).